We begin with the raw amino-acid sequence, 1042 residues long: Carbamoyl phosphate synthase large chain (1042 aa).

The tract at residues 1 to 417 is carboxyphosphate synthetic domain; sequence MTEDSRTILL…SLLKALRSSE (417 aa). ATP-binding residues include Arg-127, Arg-182, Gly-188, Gly-189, Glu-221, Ile-223, Glu-228, Gly-254, Ile-255, His-256, Gln-297, and Glu-314. Residues 131-343 enclose the ATP-grasp 1 domain; sequence RQRMADLGQP…IARVTAKVAL (213 aa). Gln-297, Glu-314, and Asn-316 together coordinate Mg(2+). The Mn(2+) site is built by Gln-297, Glu-314, and Asn-316. Positions 418–558 are oligomerization domain; the sequence is YDPSVDWATV…SQGSTGSDVR (141 aa). The interval 559-947 is carbamoyl phosphate synthetic domain; sequence ADRDAHSVVI…WKAQVAASNA (389 aa). One can recognise an ATP-grasp 2 domain in the interval 689–880; the sequence is NRLLDERDIS…IAKLAAKVMA (192 aa). Residues Arg-725, Glu-764, Leu-766, Glu-771, Gly-796, Val-797, His-798, Ser-799, Gln-839, and Glu-851 each contribute to the ATP site. 3 residues coordinate Mg(2+): Gln-839, Glu-851, and Asn-853. Mn(2+)-binding residues include Gln-839, Glu-851, and Asn-853. The MGS-like domain occupies 947–1042; the sequence is APVPGSTAVV…DRPVNDETWG (96 aa). The interval 948-1042 is allosteric domain; the sequence is PVPGSTAVVD…DRPVNDETWG (95 aa).

It belongs to the CarB family. Composed of two chains; the small (or glutamine) chain promotes the hydrolysis of glutamine to ammonia, which is used by the large (or ammonia) chain to synthesize carbamoyl phosphate. Tetramer of heterodimers (alpha,beta)4. Requires Mg(2+) as cofactor. Mn(2+) serves as cofactor.

The catalysed reaction is hydrogencarbonate + L-glutamine + 2 ATP + H2O = carbamoyl phosphate + L-glutamate + 2 ADP + phosphate + 2 H(+). It catalyses the reaction hydrogencarbonate + NH4(+) + 2 ATP = carbamoyl phosphate + 2 ADP + phosphate + 2 H(+). Its pathway is amino-acid biosynthesis; L-arginine biosynthesis; carbamoyl phosphate from bicarbonate: step 1/1. It participates in pyrimidine metabolism; UMP biosynthesis via de novo pathway; (S)-dihydroorotate from bicarbonate: step 1/3. Large subunit of the glutamine-dependent carbamoyl phosphate synthetase (CPSase). CPSase catalyzes the formation of carbamoyl phosphate from the ammonia moiety of glutamine, carbonate, and phosphate donated by ATP, constituting the first step of 2 biosynthetic pathways, one leading to arginine and/or urea and the other to pyrimidine nucleotides. The large subunit (synthetase) binds the substrates ammonia (free or transferred from glutamine from the small subunit), hydrogencarbonate and ATP and carries out an ATP-coupled ligase reaction, activating hydrogencarbonate by forming carboxy phosphate which reacts with ammonia to form carbamoyl phosphate. The sequence is that of Carbamoyl phosphate synthase large chain from Halobacterium salinarum (strain ATCC 700922 / JCM 11081 / NRC-1) (Halobacterium halobium).